Consider the following 691-residue polypeptide: MALLLTLTSPDLEGTWDTRDKDGFKAQEGPPLAVPEFPVCGLYRIYGVCGSFSSFFIIRCSLCALETLKSPQHDPLEIPEQSLKLIPLVSGKRELTRGQKAGEKPLAAGPGEEELLRGSAPHAQDTQSEELPPSCTISGEKKPPAVSGEATGADAGRLCPPPRSRAPHKDRTLARSRPQTQGEDCSLPVGEVKIGKRSYSPAPGKQKKPNAMGLAPTSSPGAPNSARATHNPVPCGSGRGPCHLANLLSTLAQSNQNRDHKQGPPEVTCQIRKKTRTLYRSDQLEELEKIFQEDHYPDSDKRREIAQTVGVTPQRIMVKGAGSLVAGWSGGGPTIETLELQSERSAVAWVWFQNRRAKWRKMEKLNGKESKDNPAAPGPASSQCSSAAEILPAVPMEPKPDPFPQESPLDTFPEPPMLLTSDQTLAPTQPSEGAQRVVTPPLFSPPPVRRADLPFPLGPVHTPQLMPLLMDVAGSDSSHKDGPCGSWGTSITLPPPCSYLEELEPQDYQQSNQPGPFQFSQAPQPPLFQSPQPKLPYLPTFPFSMPSSLTLPPPEDSLFMFPCGPSGGTSQGYCPGASSGQILMQPPAGNIGTASWSDPCLPELPFPGPFCPQALGHPPGGDGYFPDLFPTPCPQALGRQPSSALSWMPEGARPGTGPLLSKAKEEPPAASLDQPSALEEARGDDKNSHVP.

Residues 94-103 (ELTRGQKAGE) are compositionally biased toward basic and acidic residues. The disordered stretch occupies residues 94–233 (ELTRGQKAGE…NSARATHNPV (140 aa)). Residues 216–228 (PTSSPGAPNSARA) are compositionally biased toward polar residues. A DNA-binding region (homeobox) is located at residues 272–363 (RKKTRTLYRS…NRRAKWRKME (92 aa)). 3 disordered regions span residues 366–385 (NGKE…SQCS), 394–437 (VPME…AQRV), and 635–691 (QALG…SHVP). Positions 395 to 405 (PMEPKPDPFPQ) are enriched in pro residues. Over residues 420 to 432 (TSDQTLAPTQPSE) the composition is skewed to polar residues. A compositionally biased stretch (basic and acidic residues) spans 679–691 (EEARGDDKNSHVP).

In terms of tissue distribution, expressed in ovaries, testes and pancreas. Expressed within all stages of the adult female germline, from primordial follicles through to MII oocytes.

It localises to the nucleus. Its function is as follows. Transcription factor which may play a role in oogenesis. Binds preferentially to the DNA sequences 5'-TAATTG-3', 5'-TAGTTG-3' and 5'-TAATTA-3'. This is Homeobox protein NOBOX (NOBOX) from Homo sapiens (Human).